Here is a 232-residue protein sequence, read N- to C-terminus: 5'-methylthioadenosine/S-adenosylhomocysteine nucleosidase (232 aa).

Catalysis depends on Glu12, which acts as the Proton acceptor. Substrate-binding positions include Gly78, Ile152, and 173 to 174 (ME). The active-site Proton donor is the Asp197.

The protein belongs to the PNP/UDP phosphorylase family. MtnN subfamily. Homodimer.

The enzyme catalyses S-adenosyl-L-homocysteine + H2O = S-(5-deoxy-D-ribos-5-yl)-L-homocysteine + adenine. The catalysed reaction is S-methyl-5'-thioadenosine + H2O = 5-(methylsulfanyl)-D-ribose + adenine. It carries out the reaction 5'-deoxyadenosine + H2O = 5-deoxy-D-ribose + adenine. It participates in amino-acid biosynthesis; L-methionine biosynthesis via salvage pathway; S-methyl-5-thio-alpha-D-ribose 1-phosphate from S-methyl-5'-thioadenosine (hydrolase route): step 1/2. Its function is as follows. Catalyzes the irreversible cleavage of the glycosidic bond in both 5'-methylthioadenosine (MTA) and S-adenosylhomocysteine (SAH/AdoHcy) to adenine and the corresponding thioribose, 5'-methylthioribose and S-ribosylhomocysteine, respectively. Also cleaves 5'-deoxyadenosine, a toxic by-product of radical S-adenosylmethionine (SAM) enzymes, into 5-deoxyribose and adenine. Thus, is required for in vivo function of the radical SAM enzymes biotin synthase and lipoic acid synthase, that are inhibited by 5'-deoxyadenosine accumulation. In Klebsiella pneumoniae (strain 342), this protein is 5'-methylthioadenosine/S-adenosylhomocysteine nucleosidase.